The primary structure comprises 256 residues: PHD finger protein ALFIN-LIKE 6 (256 aa).

Positions 144–200 are disordered; it reads SKDLSVNNNNSKSKPSGVKSRQSESLSKVAKMSSPPPKEEEEEEDESEDESEDDEQG. Over residues 146-163 the composition is skewed to low complexity; the sequence is DLSVNNNNSKSKPSGVKS. Acidic residues predominate over residues 182–199; the sequence is EEEEEEDESEDESEDDEQ. Residues 200 to 252 form a PHD-type zinc finger; that stretch reads GAVCGACGDNYGTDEFWICCDACEKWFHGKCVKITPAKAEHIKHYKCPTCSNK.

It belongs to the Alfin family. Interacts with H3K4me3 and to a lesser extent with H3K4me2. In terms of tissue distribution, ubiquitously expressed.

The protein localises to the nucleus. Its function is as follows. Histone-binding component that specifically recognizes H3 tails trimethylated on 'Lys-4' (H3K4me3), which mark transcription start sites of virtually all active genes. The chain is PHD finger protein ALFIN-LIKE 6 (AL6) from Arabidopsis thaliana (Mouse-ear cress).